The chain runs to 502 residues: Probable cytosol aminopeptidase (502 aa).

Mn(2+) contacts are provided by K270 and D275. The active site involves K282. Mn(2+)-binding residues include D293, D352, and E354. The active site involves R356.

Belongs to the peptidase M17 family. The cofactor is Mn(2+).

It is found in the cytoplasm. It carries out the reaction Release of an N-terminal amino acid, Xaa-|-Yaa-, in which Xaa is preferably Leu, but may be other amino acids including Pro although not Arg or Lys, and Yaa may be Pro. Amino acid amides and methyl esters are also readily hydrolyzed, but rates on arylamides are exceedingly low.. The enzyme catalyses Release of an N-terminal amino acid, preferentially leucine, but not glutamic or aspartic acids.. In terms of biological role, presumably involved in the processing and regular turnover of intracellular proteins. Catalyzes the removal of unsubstituted N-terminal amino acids from various peptides. The polypeptide is Probable cytosol aminopeptidase (Desulfotalea psychrophila (strain LSv54 / DSM 12343)).